Here is a 178-residue protein sequence, read N- to C-terminus: Putative type II secretion system M-type protein YghD (178 aa).

Over Met-1–Met-39 the chain is Cytoplasmic. Residues Leu-40–Leu-60 form a helical membrane-spanning segment. The Periplasmic portion of the chain corresponds to Ser-61 to Gly-178.

The protein belongs to the GSP M family.

It localises to the cell inner membrane. Involved in a type II secretion system (T2SS, formerly general secretion pathway, GSP) for the export of folded proteins across the outer membrane. The polypeptide is Putative type II secretion system M-type protein YghD (yghD) (Escherichia coli (strain K12)).